A 419-amino-acid chain; its full sequence is MNGSGSGIRTRRTAVTGIGVVAPNGLHADTYWKSVKEGASVLDRITREGCEHLPLRVAGEVRGFDPSALIEETFLVQTDLFTHFALAAADAALQDAGLTKAAAVADSPYSVGVVTAAGSGGGEFGQRELQKLWGQGSRFVGPYQSIAWFYAASTGQISIRSGFKGPCGVVASDEAGGLDAVAHAARVVERGTDVVVVGAAEAPLAPYSMVCQLGYPELSTDEDPAIAYRPFTSAARGFVPAEGGAVLIVEEADRAHRRGAVVRATVAGHAATFTGASHWDQSREGLAHAIHGALDEAGCAPEEIDVVFADAMGVPEADRAEALALVDALGRHAPRVPVTAPKTGIGRSYCGAALLDIAAGAGMEHGQIPPTPNVFDICHQIDLVTATARPASSAPLVLSRGLMGSNAALVLRPGPGSTA.

Positions 10–413 constitute a Ketosynthase family 3 (KS3) domain; that stretch reads TRRTAVTGIG…GSNAALVLRP (404 aa).

It belongs to the thiolase-like superfamily. Beta-ketoacyl-ACP synthases family.

Its pathway is antibiotic biosynthesis; curamycin biosynthesis. The sequence is that of Putative polyketide beta-ketoacyl synthase 2 (curB) from Streptomyces cyaneus (Streptomyces curacoi).